The following is a 127-amino-acid chain: uncharacterized protein (127 aa).

This is an uncharacterized protein from Homo sapiens (Human).